We begin with the raw amino-acid sequence, 185 residues long: Probable gluconokinase (185 aa).

11–18 (GVSGSGKS) is a binding site for ATP.

Belongs to the gluconokinase GntK/GntV family.

It carries out the reaction D-gluconate + ATP = 6-phospho-D-gluconate + ADP + H(+). The protein operates within carbohydrate acid metabolism; D-gluconate degradation. This Rattus norvegicus (Rat) protein is Probable gluconokinase (Idnk).